Here is a 73-residue protein sequence, read N- to C-terminus: Translational regulator CsrA (73 aa).

The tract at residues 54-73 is disordered; it reads ENRAASDSPWSPNSLPQLPV. The segment covering 61–73 has biased composition (polar residues); sequence SPWSPNSLPQLPV.

The protein belongs to the CsrA/RsmA family. In terms of assembly, homodimer; the beta-strands of each monomer intercalate to form a hydrophobic core, while the alpha-helices form wings that extend away from the core.

It is found in the cytoplasm. Functionally, a translational regulator that binds mRNA to regulate translation initiation and/or mRNA stability. Usually binds in the 5'-UTR at or near the Shine-Dalgarno sequence preventing ribosome-binding, thus repressing translation. Its main target seems to be the major flagellin gene, while its function is anatagonized by FliW. This Treponema pallidum (strain Nichols) protein is Translational regulator CsrA.